The sequence spans 419 residues: L-rhamnose isomerase (419 aa).

Residues H262, D294, and D296 each coordinate Mn(2+).

It belongs to the rhamnose isomerase family. As to quaternary structure, homotetramer. Requires Mn(2+) as cofactor.

The protein resides in the cytoplasm. The enzyme catalyses L-rhamnopyranose = L-rhamnulose. It participates in carbohydrate degradation; L-rhamnose degradation; glycerone phosphate from L-rhamnose: step 1/3. Its function is as follows. Catalyzes the interconversion of L-rhamnose and L-rhamnulose. The chain is L-rhamnose isomerase from Escherichia coli O45:K1 (strain S88 / ExPEC).